Here is a 57-residue protein sequence, read N- to C-terminus: Large ribosomal subunit protein bL32c (57 aa).

It belongs to the bacterial ribosomal protein bL32 family.

The protein localises to the plastid. Its subcellular location is the chloroplast. In Nandina domestica (Heavenly bamboo), this protein is Large ribosomal subunit protein bL32c.